The sequence spans 1685 residues: Myomesin-1 (1685 aa).

The disordered stretch occupies residues 33 to 80 (KKRSAVYTQGSTAYSSRSSAAHRRESEAFRRASASSSQQQASQHALSS). Low complexity-rich tracts occupy residues 41-51 (QGSTAYSSRSS) and 63-80 (RASA…ALSS). At S113 the chain carries Phosphoserine. Positions 177–244 (GITTSKQSTA…TSEKKSRKVV (68 aa)) are disordered. Residues 179 to 220 (TTSKQSTASKQTTASKQSTASKQSTASKQSTASRQSTASRQS) show a composition bias toward low complexity. 6 tandem repeats follow at residues 182 to 187 (KQSTAS), 188 to 193 (KQTTAS), 194 to 199 (KQSTAS), 200 to 205 (KQSTAS), 206 to 211 (KQSTAS), and 212 to 217 (RQSTAS). Residues 182–217 (KQSTASKQTTASKQSTASKQSTASKQSTASRQSTAS) form a 6 X 6 AA tandem repeats region. Over residues 221–233 (VVSKQATSALQQE) the composition is skewed to polar residues. Ig-like C2-type domains are found at residues 277–368 (PEFI…ASVV) and 396–498 (PYGY…AYVF). 3 Fibronectin type-III domains span residues 512–607 (APLD…ALDP), 640–734 (PPTD…VVGD), and 741–834 (APGK…VKAA). The interval 840-938 (SPDVCPALSD…TDRAPPSPPC (99 aa)) is disordered. A compositionally biased stretch (low complexity) spans 874 to 888 (LLGSKPNKPSLPSSS). S883 and S887 each carry phosphoserine. Residues 889–902 (QNLGQTEVSKVSET) are compositionally biased toward polar residues. The span at 920-931 (SKSDPLKKKTDR) shows a compositional bias: basic and acidic residues. 2 consecutive Fibronectin type-III domains span residues 933–1034 (PPSP…CEEW) and 1041–1140 (PPHS…TRPG). S1054 carries the post-translational modification Phosphoserine. 3 consecutive Ig-like C2-type domains span residues 1132–1230 (PVVA…EELK), 1358–1444 (PHFV…LKLV), and 1573–1662 (RVLG…FTVS). A disulfide bond links C1160 and C1210.

In terms of assembly, homodimer. Interacts with TTN/titin. Interacts with PNKD.

It is found in the cytoplasm. The protein resides in the myofibril. It localises to the sarcomere. Its subcellular location is the m line. Its function is as follows. Major component of the vertebrate myofibrillar M band. Binds myosin, titin, and light meromyosin. This binding is dose dependent. The protein is Myomesin-1 (MYOM1) of Homo sapiens (Human).